Consider the following 256-residue polypeptide: MKPESGQALFHVALASCLCVATVHTGIFEHVSVQVGYEYYAEAPVTSLPAFLAMPFNSLVNMAYVFLGVYWLRSQARAPGGPAERRRARYLKDVFAGMALVYGPVQWLRIGMQTQPTAVLDQWLTLPIFAWPVAWCLCLDRGWKPWLFLAVEGLSLCSYSLALLHPHGFELALGLHIAAAVGQALRIQGRHGNISSGTYLALGVLSCLGFVVLKLCDHELAQWHLFQQLTGHFWSKVCDVLQFHFAFLFLTSLHTC.

A run of 7 helical transmembrane segments spans residues 8–28, 51–71, 94–112, 119–139, 146–168, 193–213, and 233–253; these read ALFH…TGIF, FLAM…GVYW, VFAG…RIGM, VLDQ…CLCL, WLFL…HPHG, NISS…FVVL, and FWSK…LTSL.

It is found in the membrane. This is Transmembrane protein 187 (TMEM187) from Bos taurus (Bovine).